Here is a 391-residue protein sequence, read N- to C-terminus: 8-amino-7-oxononanoate synthase (391 aa).

Arg19 is a binding site for substrate. 106 to 107 (GY) contacts pyridoxal 5'-phosphate. His131 provides a ligand contact to substrate. The pyridoxal 5'-phosphate site is built by Ser178, His206, and Thr234. Residue Lys237 is modified to N6-(pyridoxal phosphate)lysine. A substrate-binding site is contributed by Thr353.

It belongs to the class-II pyridoxal-phosphate-dependent aminotransferase family. BioF subfamily. As to quaternary structure, homodimer. Requires pyridoxal 5'-phosphate as cofactor.

It catalyses the reaction 6-carboxyhexanoyl-[ACP] + L-alanine + H(+) = (8S)-8-amino-7-oxononanoate + holo-[ACP] + CO2. It functions in the pathway cofactor biosynthesis; biotin biosynthesis. In terms of biological role, catalyzes the decarboxylative condensation of pimeloyl-[acyl-carrier protein] and L-alanine to produce 8-amino-7-oxononanoate (AON), [acyl-carrier protein], and carbon dioxide. This is 8-amino-7-oxononanoate synthase from Pelobacter propionicus (strain DSM 2379 / NBRC 103807 / OttBd1).